The primary structure comprises 256 residues: 1-(5-phosphoribosyl)-5-[(5-phosphoribosylamino)methylideneamino] imidazole-4-carboxamide isomerase (256 aa).

Asp-8 serves as the catalytic Proton acceptor. The active-site Proton donor is the Asp-129.

It belongs to the HisA/HisF family.

The protein localises to the cytoplasm. It catalyses the reaction 1-(5-phospho-beta-D-ribosyl)-5-[(5-phospho-beta-D-ribosylamino)methylideneamino]imidazole-4-carboxamide = 5-[(5-phospho-1-deoxy-D-ribulos-1-ylimino)methylamino]-1-(5-phospho-beta-D-ribosyl)imidazole-4-carboxamide. The protein operates within amino-acid biosynthesis; L-histidine biosynthesis; L-histidine from 5-phospho-alpha-D-ribose 1-diphosphate: step 4/9. The sequence is that of 1-(5-phosphoribosyl)-5-[(5-phosphoribosylamino)methylideneamino] imidazole-4-carboxamide isomerase from Prochlorococcus marinus (strain NATL2A).